The primary structure comprises 706 residues: Complement C1r-B subcomponent (706 aa).

Positions 1 to 16 (MWLFALLVTLFYGVEG) are cleaved as a signal peptide. The 124-residue stretch at 17 to 140 (SIYLPQKLYG…KGFLAYYQAV (124 aa)) folds into the CUB 1 domain. Residues glutamate 65, aspartate 73, and aspartate 118 each contribute to the Ca(2+) site. Cysteine 70 and cysteine 88 are disulfide-bonded. Asparagine 124 carries an N-linked (GlcNAc...) asparagine glycan. Residues aspartate 141, leucine 142, and glutamate 144 each contribute to the Ca(2+) site. An EGF-like; calcium-binding domain is found at 141 to 189 (DLDECASQPNSVEEGLQPRCQHLCHNYVGGYFCSCHPGYELQKDGQSCQ). 4 disulfides stabilise this stretch: cysteine 145/cysteine 164, cysteine 160/cysteine 173, cysteine 175/cysteine 188, and cysteine 192/cysteine 219. Ca(2+)-binding residues include asparagine 166, tyrosine 167, and glycine 170. Residue asparagine 166 is modified to (3R)-3-hydroxyasparagine. Residues 192-304 (CSSELYTEPS…RGWKLHYTTE (113 aa)) form the CUB 2 domain. Serine 205 bears the Phosphoserine; by CK2 mark. An N-linked (GlcNAc...) asparagine glycan is attached at asparagine 220. 4 residues coordinate Ca(2+): aspartate 242, aspartate 252, aspartate 289, and aspartate 293. Cysteine 249 and cysteine 267 are oxidised to a cystine. Sushi domains are found at residues 306-372 (IKCP…RCKI) and 373-448 (KNCG…RCLP). 5 disulfides stabilise this stretch: cysteine 308/cysteine 357, cysteine 337/cysteine 370, cysteine 375/cysteine 428, cysteine 405/cysteine 446, and cysteine 450/cysteine 578. Positions 463-703 (IIGGQPARPG…YVDWIKKEMG (241 aa)) constitute a Peptidase S1 domain. Catalysis depends on charge relay system residues histidine 501 and aspartate 558. N-linked (GlcNAc...) asparagine glycosylation occurs at asparagine 582. Cystine bridges form between cysteine 621-cysteine 640 and cysteine 651-cysteine 681. Residue serine 655 is the Charge relay system of the active site.

The protein belongs to the peptidase S1 family. As to quaternary structure, core component of the complement C1 complex, a calcium-dependent complex composed of 1 molecule of the C1Q subcomplex, 2 molecules of C1R and 2 molecules of C1S. The C1Q subcomplex is composed 18 subunits: 3 chains of C1QA, C1QB, and C1QC trimerize to form 6 collagen-like triple helices connected to six globular ligand-recognition modules. Within the C1 complex, C1R is a dimer of identical chains, each of which is activated by cleavage into two chains, heavy and light, connected by disulfide bonds. In terms of processing, cleaved and activated by autocatalytic processing to generate Complement C1r subcomponent heavy and light chains that are connected by disulfide bonds. Post-translationally, the iron and 2-oxoglutarate dependent 3-hydroxylation of aspartate and asparagine is (R) stereospecific within EGF domains.

It localises to the secreted. It is found in the cell surface. It catalyses the reaction Selective cleavage of Lys(or Arg)-|-Ile bond in complement subcomponent C1s to form the active form of C1s (EC 3.4.21.42).. Its activity is regulated as follows. Activated by the C1Q subcomplex of the C1 complex following C1Q binding to immunoglobulins (IgG or IgM) complexed with antigens to form antigen-antibody complexes on the surface of pathogens. Immunoglobulin-binding promotes autoactivation of C1R, which results in the cleavage of the Arg-Ile bond in the catalytic domain. Functionally, serine protease component of the complement C1 complex, a multiprotein complex that initiates the classical pathway of the complement system, a cascade of proteins that leads to phagocytosis and breakdown of pathogens and signaling that strengthens the adaptive immune system. C1R catalyzes the first enzymatic step in the classical complement pathway: it is activated by the C1Q subcomplex of the C1 complex, which associates with IgG or IgM immunoglobulins complexed with antigens to form antigen-antibody complexes on the surface of pathogens. Immunoglobulin-binding promotes the autocatalytic cleavage and activation of C1R. Activated C1R then cleaves and activates C1S, the second protease of the classical complement pathway. It is unclear if C1R activates C1S within single, strained C1 complexes or between neighboring C1 complexes on surfaces. The chain is Complement C1r-B subcomponent (C1rb) from Mus musculus (Mouse).